The primary structure comprises 220 residues: GTP-binding protein YPT53 (220 aa).

GTP-binding positions include 19 to 26, 67 to 71, and 125 to 128; these read GESAVGKS, DTAGQ, and NKMD. 2 S-geranylgeranyl cysteine lipidation sites follow: Cys218 and Cys220. At Cys220 the chain carries Cysteine methyl ester.

The protein belongs to the small GTPase superfamily. Rab family.

It localises to the cell membrane. Functionally, required for transport in the endocytic pathway and for correct sorting of the vacuolar hydrolases suggesting a possible intersection of the endocytic with the vacuolar sorting pathway. May be involved in recruiting the MON1-CCZ1 complex to membranes enriched in phosphatidylinositol 3-phosphate (PtdIns[3]P) or other charged lipids, leading to recruitment of YPT7. This is GTP-binding protein YPT53 (YPT53) from Saccharomyces cerevisiae (strain ATCC 204508 / S288c) (Baker's yeast).